A 590-amino-acid chain; its full sequence is Laccase-19 (590 aa).

The first 28 residues, 1–28, serve as a signal peptide directing secretion; that stretch reads MEKLSMVTSLLCAITVAVLAVAVVSGEA. Plastocyanin-like domains lie at 36–152 and 161–315; these read VVHE…PRDG and KDVP…YAGT. N-linked (GlcNAc...) asparagine glycosylation is found at Asn41 and Asn47. Cu cation contacts are provided by His86 and His88. An N-linked (GlcNAc...) asparagine glycan is attached at Asn120. Cu cation-binding residues include His131 and His133. N-linked (GlcNAc...) asparagine glycans are attached at residues Asn205, Asn344, Asn378, Asn397, Asn434, and Asn465. The region spanning 424–566 is the Plastocyanin-like 3 domain; sequence DFPIRPPRPF…ATAFIVEDGP (143 aa). Positions 483, 486, 488, 545, 546, 547, 551, and 556 each coordinate Cu cation. The disordered stretch occupies residues 565 to 590; that stretch reads GPTPETSLPPPPPEFKRCGNNGLSQP.

The protein belongs to the multicopper oxidase family. It depends on Cu cation as a cofactor.

It localises to the secreted. It is found in the extracellular space. The protein localises to the apoplast. It catalyses the reaction 4 hydroquinone + O2 = 4 benzosemiquinone + 2 H2O. In terms of biological role, lignin degradation and detoxification of lignin-derived products. In Oryza sativa subsp. japonica (Rice), this protein is Laccase-19 (LAC19).